We begin with the raw amino-acid sequence, 343 residues long: GTPase Obg (343 aa).

Residues 1–159 (MKFVDSASIF…LQLDMELKLM (159 aa)) form the Obg domain. Positions 121–144 (GHGGRGNQHFATSTNQAPRRSEPG) are disordered. Positions 129 to 138 (HFATSTNQAP) are enriched in polar residues. The region spanning 160–323 (ADVGLVGFPN…LKDELWREVS (164 aa)) is the OBG-type G domain. GTP contacts are provided by residues 166 to 173 (GFPNAGKS), 191 to 195 (FTTLV), 213 to 216 (DIPG), 280 to 283 (TKMD), and 304 to 306 (SSV). Positions 173 and 193 each coordinate Mg(2+). The segment at 322 to 343 (VSMRDRPEESSDPEGEGDGGTP) is disordered. The span at 331 to 343 (SSDPEGEGDGGTP) shows a compositional bias: acidic residues.

It belongs to the TRAFAC class OBG-HflX-like GTPase superfamily. OBG GTPase family. As to quaternary structure, monomer. Mg(2+) is required as a cofactor.

The protein resides in the cytoplasm. In terms of biological role, an essential GTPase which binds GTP, GDP and possibly (p)ppGpp with moderate affinity, with high nucleotide exchange rates and a fairly low GTP hydrolysis rate. Plays a role in control of the cell cycle, stress response, ribosome biogenesis and in those bacteria that undergo differentiation, in morphogenesis control. The chain is GTPase Obg from Chlorobium luteolum (strain DSM 273 / BCRC 81028 / 2530) (Pelodictyon luteolum).